A 527-amino-acid chain; its full sequence is Coiled-coil domain-containing protein 148 (527 aa).

Coiled coils occupy residues 289-353 (LAKD…TEIK) and 401-438 (LEKR…VAVQ).

The chain is Coiled-coil domain-containing protein 148 (Ccdc148) from Mus musculus (Mouse).